The following is an 831-amino-acid chain: Multiphosphoryl transfer protein (831 aa).

Residues methionine 1 to serine 90 enclose the HPr domain. Histidine 15 acts as the Pros-phosphohistidine intermediate; for HPr activity in catalysis. At histidine 15 the chain carries Phosphohistidine; by EI. Residues glycine 119–aspartate 650 are PTS EI. Residue histidine 298 is the Tele-phosphohistidine intermediate; for PTS EI activity of the active site. Histidine 298 is subject to Phosphohistidine; by autocatalysis. The phosphoenolpyruvate site is built by arginine 405 and arginine 441. 2 residues coordinate Mg(2+): glutamate 540 and aspartate 564. Phosphoenolpyruvate is bound by residues asparagine 563–aspartate 564 and arginine 574. The active-site Proton donor; for EI activity is the cysteine 611. Residues proline 685 to glutamate 828 form the PTS EIIA type-2 domain. Residue histidine 747 is the Tele-phosphohistidine intermediate; for PTS EIIA activity of the active site. Histidine 747 is subject to Phosphohistidine; by HPr.

This sequence belongs to the PEP-utilizing enzyme family. The cofactor is Mg(2+).

The protein resides in the cytoplasm. The catalysed reaction is L-histidyl-[protein] + phosphoenolpyruvate = N(pros)-phospho-L-histidyl-[protein] + pyruvate. It catalyses the reaction D-fructose(out) + N(pros)-phospho-L-histidyl-[protein] = D-fructose 1-phosphate(in) + L-histidyl-[protein]. Its function is as follows. Multifunctional protein that includes general (non sugar-specific) and sugar-specific components of the phosphoenolpyruvate-dependent sugar phosphotransferase system (sugar PTS). This major carbohydrate active transport system catalyzes the phosphorylation of incoming sugar substrates concomitantly with their translocation across the cell membrane. The enzyme II FryABC PTS system is involved in fructose transport. In Shigella flexneri, this protein is Multiphosphoryl transfer protein (fryA).